The primary structure comprises 309 residues: Homoserine kinase (309 aa).

91-101 contacts ATP; the sequence is PIGSGLGSSAC.

It belongs to the GHMP kinase family. Homoserine kinase subfamily.

Its subcellular location is the cytoplasm. It carries out the reaction L-homoserine + ATP = O-phospho-L-homoserine + ADP + H(+). It participates in amino-acid biosynthesis; L-threonine biosynthesis; L-threonine from L-aspartate: step 4/5. In terms of biological role, catalyzes the ATP-dependent phosphorylation of L-homoserine to L-homoserine phosphate. The protein is Homoserine kinase of Edwardsiella ictaluri (strain 93-146).